The sequence spans 815 residues: Phenylalanine--tRNA ligase beta subunit (815 aa).

The tRNA-binding domain occupies 39 to 153 (ASHAQGVVVG…NVPDLGQPVG (115 aa)). Residues 414 to 498 (KSAEPVKLRR…RLVGFDRFEA (85 aa)) form the B5 domain. Positions 476, 482, 485, and 486 each coordinate Mg(2+). The 94-residue stretch at 721-814 (PTVPAMELDL…LVKQFSAELR (94 aa)) folds into the FDX-ACB domain.

Belongs to the phenylalanyl-tRNA synthetase beta subunit family. Type 1 subfamily. Tetramer of two alpha and two beta subunits. It depends on Mg(2+) as a cofactor.

It is found in the cytoplasm. It catalyses the reaction tRNA(Phe) + L-phenylalanine + ATP = L-phenylalanyl-tRNA(Phe) + AMP + diphosphate + H(+). This Prochlorococcus marinus (strain MIT 9313) protein is Phenylalanine--tRNA ligase beta subunit.